Here is a 188-residue protein sequence, read N- to C-terminus: Probable manganese efflux pump MntP (188 aa).

The next 5 helical transmembrane spans lie at 3-23, 66-86, 106-128, 143-163, and 168-188; these read ITAT…ASIG, LEWN…RMII, WLLV…GLAF, ATLI…SIIG, and ILGG…HFHG.

The protein belongs to the MntP (TC 9.B.29) family.

It is found in the cell inner membrane. Probably functions as a manganese efflux pump. This Escherichia coli O139:H28 (strain E24377A / ETEC) protein is Probable manganese efflux pump MntP.